Here is a 663-residue protein sequence, read N- to C-terminus: UvrABC system protein B (663 aa).

The Helicase ATP-binding domain maps to 31–271; sequence DNIEGGEKAQ…EASIAKIQAE (241 aa). Residue 44 to 51 participates in ATP binding; sequence GATGTGKT. The short motif at 97–120 is the Beta-hairpin element; sequence YYDYYQPEAYVPSSDTYIEKDSSV. In terms of domain architecture, Helicase C-terminal spans 435–601; that stretch reads QMDDLLGEIN…TIKKEIRDLI (167 aa). One can recognise a UVR domain in the interval 627–662; that stretch reads QEAIKKLQKQMHEAAELLDFELAAQIRDMVLELKSM.

The protein belongs to the UvrB family. Forms a heterotetramer with UvrA during the search for lesions. Interacts with UvrC in an incision complex.

It localises to the cytoplasm. In terms of biological role, the UvrABC repair system catalyzes the recognition and processing of DNA lesions. A damage recognition complex composed of 2 UvrA and 2 UvrB subunits scans DNA for abnormalities. Upon binding of the UvrA(2)B(2) complex to a putative damaged site, the DNA wraps around one UvrB monomer. DNA wrap is dependent on ATP binding by UvrB and probably causes local melting of the DNA helix, facilitating insertion of UvrB beta-hairpin between the DNA strands. Then UvrB probes one DNA strand for the presence of a lesion. If a lesion is found the UvrA subunits dissociate and the UvrB-DNA preincision complex is formed. This complex is subsequently bound by UvrC and the second UvrB is released. If no lesion is found, the DNA wraps around the other UvrB subunit that will check the other stand for damage. This Streptococcus uberis (strain ATCC BAA-854 / 0140J) protein is UvrABC system protein B.